The chain runs to 329 residues: Phosphate acyltransferase (329 aa).

This sequence belongs to the PlsX family. Homodimer. Probably interacts with PlsY.

The protein resides in the cytoplasm. The enzyme catalyses a fatty acyl-[ACP] + phosphate = an acyl phosphate + holo-[ACP]. The protein operates within lipid metabolism; phospholipid metabolism. In terms of biological role, catalyzes the reversible formation of acyl-phosphate (acyl-PO(4)) from acyl-[acyl-carrier-protein] (acyl-ACP). This enzyme utilizes acyl-ACP as fatty acyl donor, but not acyl-CoA. In Anoxybacillus flavithermus (strain DSM 21510 / WK1), this protein is Phosphate acyltransferase.